The following is a 162-amino-acid chain: NADH-quinone oxidoreductase subunit I (162 aa).

2 4Fe-4S ferredoxin-type domains span residues 52 to 82 (LRRY…IEAG) and 93 to 122 (VRYD…EGPN). Residues cysteine 62, cysteine 65, cysteine 68, cysteine 72, cysteine 102, cysteine 105, cysteine 108, and cysteine 112 each coordinate [4Fe-4S] cluster.

The protein belongs to the complex I 23 kDa subunit family. In terms of assembly, NDH-1 is composed of 14 different subunits. Subunits NuoA, H, J, K, L, M, N constitute the membrane sector of the complex. The cofactor is [4Fe-4S] cluster.

Its subcellular location is the cell inner membrane. It carries out the reaction a quinone + NADH + 5 H(+)(in) = a quinol + NAD(+) + 4 H(+)(out). In terms of biological role, NDH-1 shuttles electrons from NADH, via FMN and iron-sulfur (Fe-S) centers, to quinones in the respiratory chain. The immediate electron acceptor for the enzyme in this species is believed to be ubiquinone. Couples the redox reaction to proton translocation (for every two electrons transferred, four hydrogen ions are translocated across the cytoplasmic membrane), and thus conserves the redox energy in a proton gradient. This is NADH-quinone oxidoreductase subunit I from Nitrobacter winogradskyi (strain ATCC 25391 / DSM 10237 / CIP 104748 / NCIMB 11846 / Nb-255).